A 31-amino-acid polypeptide reads, in one-letter code: Toxin BmKK12 (31 aa).

Gln-1 carries the post-translational modification Pyrrolidone carboxylic acid. Cystine bridges form between Cys-4-Cys-20, Cys-10-Cys-25, and Cys-14-Cys-27. Pro-31 carries the proline amide modification.

This sequence belongs to the short scorpion toxin superfamily. Potassium channel inhibitor family. Alpha-KTx 17 subfamily. In terms of processing, the N-terminus is blocked. Expressed by the venom gland.

It localises to the secreted. Functionally, blocker of potassium channels (Kv). This is Toxin BmKK12 from Olivierus martensii (Manchurian scorpion).